We begin with the raw amino-acid sequence, 102 residues long: Small ribosomal subunit protein uS10 (102 aa).

This sequence belongs to the universal ribosomal protein uS10 family. In terms of assembly, part of the 30S ribosomal subunit.

Functionally, involved in the binding of tRNA to the ribosomes. This Pyrococcus abyssi (strain GE5 / Orsay) protein is Small ribosomal subunit protein uS10.